The primary structure comprises 299 residues: F-actin-capping protein subunit alpha-3 (299 aa).

Position 290 is a phosphoserine (Ser290).

The protein belongs to the F-actin-capping protein alpha subunit family. As to quaternary structure, component of the F-actin capping complex, composed of a heterodimer of an alpha and a beta subunit. Component of the WASH complex, composed of F-actin-capping protein subunit alpha (CAPZA1, CAPZA2 or CAPZA3), F-actin-capping protein subunit beta (CAPZB), WASHC1, WASHC2, WASHC3, WASHC4 and WASHC5.

Functionally, F-actin-capping proteins bind in a Ca(2+)-independent manner to the fast growing ends of actin filaments (barbed end) thereby blocking the exchange of subunits at these ends. Unlike other capping proteins (such as gelsolin and severin), these proteins do not sever actin filaments. May play a role in the morphogenesis of spermatid. In Macaca fascicularis (Crab-eating macaque), this protein is F-actin-capping protein subunit alpha-3 (CAPZA3).